The primary structure comprises 87 residues: Large ribosomal subunit protein bL31B (87 aa).

It belongs to the bacterial ribosomal protein bL31 family. Type B subfamily. As to quaternary structure, part of the 50S ribosomal subunit.

The polypeptide is Large ribosomal subunit protein bL31B (Latilactobacillus sakei subsp. sakei (strain 23K) (Lactobacillus sakei subsp. sakei)).